Reading from the N-terminus, the 252-residue chain is Proteasome subunit alpha 1 (252 aa).

At Met-1 the chain carries N-acetylmethionine; alternate.

Belongs to the peptidase T1A family. As to quaternary structure, the 20S proteasome core is composed of 14 alpha and 14 beta subunits that assemble into four stacked heptameric rings, resulting in a barrel-shaped structure. The two inner rings, each composed of seven catalytic beta subunits, are sandwiched by two outer rings, each composed of seven alpha subunits. H.volcanii produces at least 2 types of 20S proteasomes: an alpha1-beta proteasome and a proteasome containing all three subunits (alpha1, alpha2, and beta) that appears to be asymmetrical with homo-oligomeric alpha1 and alpha2 rings positioned on separate ends. The catalytic chamber with the active sites is on the inside of the barrel. Has probably a gated structure, the ends of the cylinder being occluded by the N-termini of the alpha-subunits. Is likely capped at one or both ends by the proteasome regulatory ATPase, PAN. In terms of processing, acetylated. The acetylated form at Met-1 was shown to be in 100-fold excess of the unacetylated form with the initiator methionine removed in whole cells and purified 20S proteasomes.

It is found in the cytoplasm. The formation of the proteasomal ATPase PAN-20S proteasome complex, via the docking of the C-termini of PAN into the intersubunit pockets in the alpha-rings, triggers opening of the gate for substrate entry. Interconversion between the open-gate and close-gate conformations leads to a dynamic regulation of the 20S proteasome proteolysis activity. In vitro, the chymotrypsin-like activity of the alpha1-beta proteasome is potently inhibited by carbobenzoxyl-leucinyl-leucinyl-leucinal-H (MG132) and significantly by N-acetyl-leucinyl-leucinyl-norleucinal-H (calpain inhibitor I). Its function is as follows. Component of the proteasome core, a large protease complex with broad specificity involved in protein degradation. The H.volcanii alpha1-beta proteasome is able to cleave oligopeptides after Phe, Tyr and Trp, poorly after Glu but not after Arg. Thus, displays chymotrypsin-like activity, low caspase-like activity but no trypsin-like activity. The chain is Proteasome subunit alpha 1 from Haloferax volcanii (strain ATCC 29605 / DSM 3757 / JCM 8879 / NBRC 14742 / NCIMB 2012 / VKM B-1768 / DS2) (Halobacterium volcanii).